A 142-amino-acid chain; its full sequence is Profilin (142 aa).

This sequence belongs to the profilin family. As to quaternary structure, occurs in many kinds of cells as a complex with monomeric actin in a 1:1 ratio. Expressed specifically in coelomocytes in response to injury.

It localises to the cytoplasm. Its subcellular location is the cytoskeleton. Its function is as follows. Binds to actin and affects the structure of the cytoskeleton. At high concentrations, profilin prevents the polymerization of actin, whereas it enhances it at low concentrations. By binding to PIP2, it inhibits the formation of IP3 and DG. This Strongylocentrotus purpuratus (Purple sea urchin) protein is Profilin.